The sequence spans 217 residues: ATP-dependent Clp protease proteolytic subunit (217 aa).

Residue Ser-119 is the Nucleophile of the active site. His-144 is a catalytic residue.

This sequence belongs to the peptidase S14 family. Fourteen ClpP subunits assemble into 2 heptameric rings which stack back to back to give a disk-like structure with a central cavity, resembling the structure of eukaryotic proteasomes.

It is found in the cytoplasm. The catalysed reaction is Hydrolysis of proteins to small peptides in the presence of ATP and magnesium. alpha-casein is the usual test substrate. In the absence of ATP, only oligopeptides shorter than five residues are hydrolyzed (such as succinyl-Leu-Tyr-|-NHMec, and Leu-Tyr-Leu-|-Tyr-Trp, in which cleavage of the -Tyr-|-Leu- and -Tyr-|-Trp bonds also occurs).. In terms of biological role, cleaves peptides in various proteins in a process that requires ATP hydrolysis. Has a chymotrypsin-like activity. Plays a major role in the degradation of misfolded proteins. This is ATP-dependent Clp protease proteolytic subunit from Bordetella bronchiseptica (strain ATCC BAA-588 / NCTC 13252 / RB50) (Alcaligenes bronchisepticus).